The primary structure comprises 233 residues: Hydroxyacylglutathione hydrolase (233 aa).

His-52, His-54, Asp-56, His-57, His-108, Asp-125, and His-163 together coordinate Zn(2+).

This sequence belongs to the metallo-beta-lactamase superfamily. Glyoxalase II family. Monomer. The cofactor is Zn(2+).

The catalysed reaction is an S-(2-hydroxyacyl)glutathione + H2O = a 2-hydroxy carboxylate + glutathione + H(+). The protein operates within secondary metabolite metabolism; methylglyoxal degradation; (R)-lactate from methylglyoxal: step 2/2. In terms of biological role, thiolesterase that catalyzes the hydrolysis of S-D-lactoyl-glutathione to form glutathione and D-lactic acid. This Histophilus somni (strain 129Pt) (Haemophilus somnus) protein is Hydroxyacylglutathione hydrolase.